The chain runs to 866 residues: Leucine--tRNA ligase (866 aa).

Residues P42–H52 carry the 'HIGH' region motif. The 'KMSKS' region signature appears at K630–S634. K633 provides a ligand contact to ATP.

The protein belongs to the class-I aminoacyl-tRNA synthetase family.

The protein localises to the cytoplasm. The enzyme catalyses tRNA(Leu) + L-leucine + ATP = L-leucyl-tRNA(Leu) + AMP + diphosphate. This chain is Leucine--tRNA ligase, found in Laribacter hongkongensis (strain HLHK9).